The primary structure comprises 577 residues: MSAATQSPMMQMASGNGASDRDPLPPGWEIKIDPQTGWPFFVDHNSRTTTWNDPRVPPEGPKDTASSANGPSRDGSRLLPIREGHPIYPQLRPGYIPIPVLHEGSENRQPHLFHAYSQPGVQRFRTEAAAATPQRSQSPLRGGMTEAAQTDKQCGQMPATATTAAAQPPTAHGPERSQSPAASDCSSSSSSASLPSSGRSSLGSHQLPRGYIPIPVIHEQNITRPAAQPSFHQAQKTHYPAQQGEYQPQQPVYHKIQGDDWEPRPLRAASPFRSPVRGASSREGSPARSGTPVHCPSPIRVHTVVDRPQPMTHREPPPVTQPENKPESKPGPAGPDLPPGHIPIQVIRREADSKPVSQKSPPPAEKVEVKVSSAPIPCPSPSPAPSAVPSPPKNVAAEQKAAPSPAPAEPAAPKSGEAETPPKHPGVLKVEAILEKVQGLEQAVDSFEGKKTDKKYLMIEEYLTKELLALDSVDPEGRADVRQARRDGVRKVQTILEKLEQKAIDVPGQVQVYELQPSNLEAEQPLQEIMGAVVADKDKKGPENKDPQTESQQLEAKAATPPNPSNPADSAGNLVAP.

Over residues 1 to 17 (MSAATQSPMMQMASGNG) the composition is skewed to polar residues. Disordered stretches follow at residues 1–81 (MSAA…LLPI), 126–207 (TEAA…SHQL), and 229–427 (PSFH…HPGV). Serine 2 is subject to N-acetylserine. 2 WW domains span residues 22–56 (DPLP…DPRV) and 126–157 (TEAA…CGQM). Serine 138 is modified (phosphoserine). Omega-N-methylarginine is present on arginine 141. The span at 158 to 204 (PATATTAAAQPPTAHGPERSQSPAASDCSSSSSSASLPSSGRSSLGS) shows a compositional bias: low complexity. Phosphoserine is present on residues serine 179 and serine 204. A compositionally biased stretch (basic and acidic residues) spans 256-265 (IQGDDWEPRP). Arginine 267 carries the omega-N-methylarginine modification. 3 positions are modified to phosphoserine: serine 280, serine 281, and serine 285. Threonine 291 is modified (phosphothreonine). Phosphoserine is present on serine 297. Pro residues-rich tracts occupy residues 332–341 (PAGPDLPPGH) and 376–392 (IPCP…PSPP). Phosphoserine occurs at positions 380, 382, and 390. A BAG domain is found at 426 to 503 (GVLKVEAILE…TILEKLEQKA (78 aa)). Residue lysine 450 forms a Glycyl lysine isopeptide (Lys-Gly) (interchain with G-Cter in SUMO1); alternate linkage. Lysine 450 is covalently cross-linked (Glycyl lysine isopeptide (Lys-Gly) (interchain with G-Cter in SUMO2); alternate). The segment at 524–577 (QPLQEIMGAVVADKDKKGPENKDPQTESQQLEAKAATPPNPSNPADSAGNLVAP) is disordered. The span at 535 to 548 (ADKDKKGPENKDPQ) shows a compositional bias: basic and acidic residues.

As to quaternary structure, forms a ternary complex with HSPA1A/HSP70 and HSPB8, serving as scaffold subunit. Component of the chaperone-assisted selective autophagy (CASA) complex consisting of BAG3, HSPA8/HSC70, HSPB8 and STUB1/CHIP. Binds to the ATPase domain of HSP70 chaperones. Interacts with BCL2. Interacts with phospholipase C-gamma proteins. Interacts with DNAJB1 and DNAJB6. Interacts (via BAG domain) with HSF1; this interaction occurs in normal and heat-shocked cells. Interacts with HSPA8/HSC70 (via NBD), HSPA1A (via NBD) and HSPA1B (via NBD). Interacts (via WW domain 1) with SYNPO2 (via PPPY motif). Interacts with HSPB8.

The protein localises to the nucleus. It localises to the cytoplasm. Co-chaperone and adapter protein that connects different classes of molecular chaperones including heat shock proteins 70 (HSP70s), e.g. HSPA1A/HSP70 or HSPA8/HSC70, and small heat shock proteins (sHSPs), e.g. HSPB8. Acts as a nucleotide-exchange factor (NEF) promoting the release of ADP from HSP70s, thereby triggering client protein release. Nucleotide release is mediated via BAG3 binding to the nucleotide-binding domain (NBD) of HSP70s, whereas client release is mediated via its binding to the substrate-binding domain (SBD). Has anti-apoptotic activity. Plays a role in the HSF1 nucleocytoplasmic transport. In Mus musculus (Mouse), this protein is BAG family molecular chaperone regulator 3 (Bag3).